The primary structure comprises 295 residues: MNIKINEYYIPTSLSGPYGITAGIDEALWFTENKANKIGRITVKGEIEEYLVPSQDAGLSIIVSGTNGDLWFSEYNANKIGKITIKGEIVEYSIPTADSGPFGITEGPDGAIWFTELTGNKIGRISNLGEVIEYKLPNDSSYPSSIVCGSDGVLWFTENQGNKIGKITMLGEITEYTIPTIGSGPVGITSGPDGALWFVEINGNRIGRITTEGIINEYDLKTVKARPHAIITGSDGALWFTQWGSNQIGRITTSGEVSEYEIPTANSEPHGIAVGPDKAIWFAEECNKIGQLILL.

His228 contacts substrate. Glu268 is a binding site for Mg(2+). Residue His270 is the Proton acceptor of the active site. Glu285 lines the Mg(2+) pocket.

It belongs to the Vgb family. Monomer. The cofactor is Mg(2+).

In terms of biological role, inactivates the type B streptogramin antibiotics by linearizing the lactone ring at the ester linkage, generating a free phenylglycine carboxylate and converting the threonyl moiety into 2-amino-butenoic acid. This is Virginiamycin B lyase from Clostridium beijerinckii (strain ATCC 51743 / NCIMB 8052) (Clostridium acetobutylicum).